Here is a 219-residue protein sequence, read N- to C-terminus: MNKEKAIVVFSGGQDSTTCLFWAKKKYKEVIAVSFDYNQKHKLELDCAKDICKKYNIEHHILDLNLLNQLAPNSLTRQDITVDKSAPKEGVPNSFVDGRNLLFLSFVAVFAKQKGINTIITGVSQSDFSGYPDCRDVFIKSLNVTLNLAMDYEFEIITPLMWINKAETWKMAYDLGVLDIVKEETLTCYNGIKADGCGECPACKLRKKGYLEFEKYLMN.

10 to 20 (FSGGQDSTTCL) lines the ATP pocket. Zn(2+) contacts are provided by Cys-188, Cys-197, Cys-200, and Cys-203.

This sequence belongs to the QueC family. In terms of assembly, homodimer. It depends on Zn(2+) as a cofactor.

It carries out the reaction 7-carboxy-7-deazaguanine + NH4(+) + ATP = 7-cyano-7-deazaguanine + ADP + phosphate + H2O + H(+). Its pathway is purine metabolism; 7-cyano-7-deazaguanine biosynthesis. Catalyzes the ATP-dependent conversion of 7-carboxy-7-deazaguanine (CDG) to 7-cyano-7-deazaguanine (preQ(0)). The sequence is that of 7-cyano-7-deazaguanine synthase from Clostridium botulinum (strain Langeland / NCTC 10281 / Type F).